Here is a 115-residue protein sequence, read N- to C-terminus: Replication initiation control protein YabA (115 aa).

Zn(2+) is bound by residues His90, Cys92, Cys106, and Cys109.

The protein belongs to the YabA family. In terms of assembly, homotetramer. Interacts with both DnaA and DnaN, acting as a bridge between these two proteins. The cofactor is Zn(2+).

The protein localises to the cytoplasm. It is found in the nucleoid. Its function is as follows. Involved in control of chromosome replication initiation. Inhibits the cooperative binding of DnaA to the oriC region, thus negatively regulating initiation of chromosome replication. Inhibits the ability of DnaA-ATP to form a helix on DNA; does not disassemble preformed DnaA-DNA helices. Decreases the residence time of DnaA on the chromosome at its binding sites (oriC, replication forks and promoter-binding sites). Tethers DnaA to the replication machinery via the DNA polymerase beta sliding clamp subunit (dnaN). Associates with oriC and other DnaA targets on the chromosome in a DnaA-dependent manner. This is Replication initiation control protein YabA from Staphylococcus aureus (strain JH1).